A 280-amino-acid chain; its full sequence is Formamidopyrimidine-DNA glycosylase (280 aa).

Catalysis depends on proline 2, which acts as the Schiff-base intermediate with DNA. The active-site Proton donor is glutamate 3. The active-site Proton donor; for beta-elimination activity is lysine 60. DNA is bound by residues histidine 93 and arginine 112. Residues 240 to 274 (YVYGQHSKPCRVCGADIIKIKVGGRGTHLCPTCQP) form an FPG-type zinc finger. The Proton donor; for delta-elimination activity role is filled by arginine 264.

Belongs to the FPG family. As to quaternary structure, monomer. Requires Zn(2+) as cofactor.

The enzyme catalyses Hydrolysis of DNA containing ring-opened 7-methylguanine residues, releasing 2,6-diamino-4-hydroxy-5-(N-methyl)formamidopyrimidine.. The catalysed reaction is 2'-deoxyribonucleotide-(2'-deoxyribose 5'-phosphate)-2'-deoxyribonucleotide-DNA = a 3'-end 2'-deoxyribonucleotide-(2,3-dehydro-2,3-deoxyribose 5'-phosphate)-DNA + a 5'-end 5'-phospho-2'-deoxyribonucleoside-DNA + H(+). Its function is as follows. Involved in base excision repair of DNA damaged by oxidation or by mutagenic agents. Acts as a DNA glycosylase that recognizes and removes damaged bases. Has a preference for oxidized purines, such as 7,8-dihydro-8-oxoguanine (8-oxoG). Has AP (apurinic/apyrimidinic) lyase activity and introduces nicks in the DNA strand. Cleaves the DNA backbone by beta-delta elimination to generate a single-strand break at the site of the removed base with both 3'- and 5'-phosphates. This chain is Formamidopyrimidine-DNA glycosylase, found in Oceanobacillus iheyensis (strain DSM 14371 / CIP 107618 / JCM 11309 / KCTC 3954 / HTE831).